Consider the following 424-residue polypeptide: Enolase (424 aa).

Gln162 contacts (2R)-2-phosphoglycerate. Glu204 functions as the Proton donor in the catalytic mechanism. 3 residues coordinate Mg(2+): Asp241, Glu284, and Asp311. Positions 336, 365, 366, and 387 each coordinate (2R)-2-phosphoglycerate. The active-site Proton acceptor is Lys336.

It belongs to the enolase family. Requires Mg(2+) as cofactor.

The protein resides in the cytoplasm. The protein localises to the secreted. Its subcellular location is the cell surface. It carries out the reaction (2R)-2-phosphoglycerate = phosphoenolpyruvate + H2O. It functions in the pathway carbohydrate degradation; glycolysis; pyruvate from D-glyceraldehyde 3-phosphate: step 4/5. Catalyzes the reversible conversion of 2-phosphoglycerate (2-PG) into phosphoenolpyruvate (PEP). It is essential for the degradation of carbohydrates via glycolysis. This Parvibaculum lavamentivorans (strain DS-1 / DSM 13023 / NCIMB 13966) protein is Enolase.